The chain runs to 205 residues: Holliday junction branch migration complex subunit RuvA (205 aa).

Positions 1 to 64 (MIGKLKGVID…EDMIRLYGFA (64 aa)) are domain I. The tract at residues 65–143 (NQLEREWFRL…AFAGDASGTI (79 aa)) is domain II. Residues 144–152 (GLKQELGAG) are flexible linker. The segment at 153–205 (AAPAPVADAVSALSNLGYSRDQAANAVAAALKEAGENADSAKLIRLGLKELSR) is domain III.

The protein belongs to the RuvA family. Homotetramer. Forms an RuvA(8)-RuvB(12)-Holliday junction (HJ) complex. HJ DNA is sandwiched between 2 RuvA tetramers; dsDNA enters through RuvA and exits via RuvB. An RuvB hexamer assembles on each DNA strand where it exits the tetramer. Each RuvB hexamer is contacted by two RuvA subunits (via domain III) on 2 adjacent RuvB subunits; this complex drives branch migration. In the full resolvosome a probable DNA-RuvA(4)-RuvB(12)-RuvC(2) complex forms which resolves the HJ.

The protein resides in the cytoplasm. In terms of biological role, the RuvA-RuvB-RuvC complex processes Holliday junction (HJ) DNA during genetic recombination and DNA repair, while the RuvA-RuvB complex plays an important role in the rescue of blocked DNA replication forks via replication fork reversal (RFR). RuvA specifically binds to HJ cruciform DNA, conferring on it an open structure. The RuvB hexamer acts as an ATP-dependent pump, pulling dsDNA into and through the RuvAB complex. HJ branch migration allows RuvC to scan DNA until it finds its consensus sequence, where it cleaves and resolves the cruciform DNA. This chain is Holliday junction branch migration complex subunit RuvA, found in Brucella anthropi (strain ATCC 49188 / DSM 6882 / CCUG 24695 / JCM 21032 / LMG 3331 / NBRC 15819 / NCTC 12168 / Alc 37) (Ochrobactrum anthropi).